The primary structure comprises 331 residues: Acyl-CoA desaturase 1 (331 aa).

At 1 to 46 (MTEVDDGCGGRLRGSVLLEDECDLKQECETPTHSLVQGRDPPVVVV) the chain is on the cytoplasmic side. A helical transmembrane segment spans residues 47-67 (WRNVVLMSVLHTAAVYGLVLL). Asn-49 serves as a coordination point for substrate. Over 68–71 (PSAS) the chain is Lumenal. A helical membrane pass occupies residues 72-90 (AYTLLAFCFVSSALGITAG). At 91–189 (AHRLWSHRSY…DRVVMFQRRF (99 aa)) the chain is on the cytoplasmic side. Residues His-92 and His-97 each contribute to the Fe cation site. The short motif at 92 to 97 (HRLWSH) is the Histidine box-1 element. Substrate contacts are provided by Asn-120, Arg-127, and Asp-128. His-129, His-132, and His-133 together coordinate Fe cation. The Histidine box-2 motif lies at 129–133 (HRVHH). Lys-161 is a substrate binding site. The helical transmembrane segment at 190–209 (YKHSVVVMCFLIPAMLPWFL) threads the bilayer. Topologically, residues 210-213 (WAES) are lumenal. A helical transmembrane segment spans residues 214 to 235 (LWVGYFVPVLLRYALVLNATWL). Substrate is bound at residue Trp-234. Residues 236–331 (VNSAAHMWGN…RTGDGSHRSG (96 aa)) lie on the Cytoplasmic side of the membrane. Residues His-241, His-270, His-273, and His-274 each contribute to the Fe cation site. A Histidine box-3 motif is present at residues 270–274 (HNYHH).

This sequence belongs to the fatty acid desaturase type 1 family. Fe(2+) is required as a cofactor. In terms of tissue distribution, expression is highest in liver, followed by brain and intestine, and lowest in spleen. Also expressed in heart, gill and muscle.

It is found in the endoplasmic reticulum membrane. The catalysed reaction is octadecanoyl-CoA + 2 Fe(II)-[cytochrome b5] + O2 + 2 H(+) = (9Z)-octadecenoyl-CoA + 2 Fe(III)-[cytochrome b5] + 2 H2O. Its function is as follows. Stearoyl-CoA desaturase that utilizes O(2) and electrons from reduced cytochrome b5 to introduce the first double bond into saturated fatty acyl-CoA substrates. Catalyzes the insertion of a cis double bond at the delta-9 position into fatty acyl-CoA substrates including palmitoyl-CoA and stearoyl-CoA. Contributes to the biosynthesis of membrane phospholipids, cholesterol esters and triglycerides. The polypeptide is Acyl-CoA desaturase 1 (Tachysurus fulvidraco (Yellow catfish)).